The chain runs to 272 residues: uncharacterized protein (272 aa).

Helical transmembrane passes span 9-29, 38-58, 154-174, and 188-208; these read PVGFVLGTIIIVIGIISGSGV, LTSFFIVTGGLCAAVFISFPP, AGEFAPAWGMIGTLVGLVLML, and AIALLTTLYGSLLANMVFNPI. At 209 to 272 the chain is on the cytoplasmic side; the sequence is AAKLEEKTES…KTKKGSVHEA (64 aa).

The protein belongs to the MotA family.

Its subcellular location is the cell membrane. Its function is as follows. May be involved in some transport function. This is an uncharacterized protein from Bacillus subtilis (strain 168).